The primary structure comprises 224 residues: Oxygen-evolving enhancer protein 3-1, chloroplastic (224 aa).

A chloroplast-targeting transit peptide spans 1–44; sequence MASMGGLHGASPAVLEGSLKINGSSRLNGSGRVAVAQRSRLVVR. The transit peptide at 45–75 directs the protein to the thylakoid; the sequence is AQQSEETSRRSVIGLVAAGLAGGSFVQAVLA. Thr189 is subject to Phosphothreonine. The residue at position 209 (Tyr209) is a Phosphotyrosine. Position 212 is a phosphothreonine (Thr212).

It belongs to the PsbQ family. Expressed in green tissue, with high steady-state mRNA levels in leaves. Not expressed in roots.

Its subcellular location is the plastid. The protein resides in the chloroplast thylakoid membrane. In terms of biological role, required for photosystem II assembly/stability and photoautotrophic growth under low light conditions. The protein is Oxygen-evolving enhancer protein 3-1, chloroplastic (PSBQ1) of Arabidopsis thaliana (Mouse-ear cress).